Reading from the N-terminus, the 94-residue chain is Mobilization protein C (94 aa).

Interacts with MobA and MobB to form the relaxosome.

In terms of biological role, this protein is essential to promote the specific transfer of the plasmid in the presence of conjugative plasmids. The polypeptide is Mobilization protein C (mobC) (Escherichia coli).